The following is a 465-amino-acid chain: Phosphatidylserine synthase 1 (465 aa).

The Cytoplasmic segment spans residues 1–35; that stretch reads MVSAMRSRTLSKDDVNYKMHFRMINEQQVEDITID. A helical transmembrane segment spans residues 36-56; sequence FFYKPHTITLLTFTTVSLMYF. At 57–68 the chain is on the lumenal side; it reads AFTRENTSQEDN. The helical transmembrane segment at 69–89 threads the bilayer; sequence IWKGILSVIFFFLIISVLAFP. Residues 90 to 102 lie on the Cytoplasmic side of the membrane; it reads NGPFTRPHPAIWR. The chain crosses the membrane as a helical span at residues 103 to 123; the sequence is MVFGLSVLYFLFLVFLLFLNV. At 124–186 the chain is on the lumenal side; the sequence is EQVKAVMYWL…AMKALLIRSY (63 aa). A helical transmembrane segment spans residues 187–207; sequence GLCWTISITWEMTELFFMHLL. Topologically, residues 208–216 are cytoplasmic; it reads PNFAECWWD. The chain crosses the membrane as a helical span at residues 217–237; sequence QVILDILLCNGGGILLGMVVC. Topologically, residues 238–286 are lumenal; that stretch reads RFLEMRTYHWASFKDIHTTTGKIKRAVLQFTPASWIYVRWFDPKSSFQR. Residues 287–307 traverse the membrane as a helical segment; that stretch reads VAGVYLFMIIWQLTELNTFFL. The Cytoplasmic portion of the chain corresponds to 308–319; sequence KHIFVFQASHPL. The helical transmembrane segment at 320–342 threads the bilayer; that stretch reads SWCRILFIGIITAPTVRQYYAYL. The Lumenal segment spans residues 343–355; that stretch reads TDTQCKRVGTQCW. A helical transmembrane segment spans residues 356–376; it reads VFGAIAFLEATVCIKFGQDLF. Residues 377 to 383 are Cytoplasmic-facing; sequence SKTHLLY. A helical transmembrane segment spans residues 384 to 404; sequence VFLWLFSVAVITFLCLYGMVW. Residues 405-465 are Lumenal-facing; it reads YADYCGQREK…GKVTNGVGKK (61 aa). Residues 440–465 form a disordered region; that stretch reads PVKQNEGTSRRKNRHKGKVTNGVGKK. The span at 449 to 465 shows a compositional bias: basic residues; the sequence is RRKNRHKGKVTNGVGKK.

Belongs to the phosphatidyl serine synthase family.

Its subcellular location is the endoplasmic reticulum membrane. It catalyses the reaction a 1,2-diacyl-sn-glycero-3-phosphoethanolamine + L-serine = a 1,2-diacyl-sn-glycero-3-phospho-L-serine + ethanolamine. It carries out the reaction a 1,2-diacyl-sn-glycero-3-phosphocholine + L-serine = a 1,2-diacyl-sn-glycero-3-phospho-L-serine + choline. Its pathway is phospholipid metabolism; phosphatidylserine biosynthesis. In terms of biological role, catalyzes a base-exchange reaction in which the polar head group of phosphatidylethanolamine (PE) or phosphatidylcholine (PC) is replaced by L-serine. Catalyzes mainly the conversion of phosphatidylcholine but also converts, in vitro and to a lesser extent, phosphatidylethanolamine. The polypeptide is Phosphatidylserine synthase 1 (ptdss1) (Xenopus tropicalis (Western clawed frog)).